A 200-amino-acid chain; its full sequence is Nascent polypeptide-associated complex subunit alpha (200 aa).

A compositionally biased stretch (basic and acidic residues) spans 1-19 (MADPRIEELPDEETKKPTV). Disordered stretches follow at residues 1 to 52 (MADP…SRNE) and 120 to 165 (QQLA…EDKD). The span at 20–34 (EELDESSDEESDAEA) shows a compositional bias: acidic residues. Residues 49–114 (SRNEKKARKA…AKIEDLNASA (66 aa)) enclose the NAC-A/B domain. Basic and acidic residues predominate over residues 127–143 (AEHDHAGHTHDHKHEAA). Residues 144–160 (KEEEEEEDDGEEVDAEG) are compositionally biased toward acidic residues. One can recognise a UBA domain in the interval 161 to 200 (IEDKDIELVMTQANVSRKKAIKALKENDNDIVNSIMALSV).

This sequence belongs to the NAC-alpha family. As to quaternary structure, part of the nascent polypeptide-associated complex (NAC), consisting of EGD2 and EGD1. NAC associates with ribosomes via EGD1.

It is found in the cytoplasm. Its subcellular location is the nucleus. Its function is as follows. Component of the nascent polypeptide-associated complex (NAC), a dynamic component of the ribosomal exit tunnel, protecting the emerging polypeptides from interaction with other cytoplasmic proteins to ensure appropriate nascent protein targeting. The NAC complex also promotes mitochondrial protein import by enhancing productive ribosome interactions with the outer mitochondrial membrane and blocks the inappropriate interaction of ribosomes translating non-secretory nascent polypeptides with translocation sites in the membrane of the endoplasmic reticulum. EGD2 may also be involved in transcription regulation. The polypeptide is Nascent polypeptide-associated complex subunit alpha (EGD2) (Chaetomium globosum (strain ATCC 6205 / CBS 148.51 / DSM 1962 / NBRC 6347 / NRRL 1970) (Soil fungus)).